A 485-amino-acid polypeptide reads, in one-letter code: NADH-quinone oxidoreductase subunit N (485 aa).

Transmembrane regions (helical) follow at residues 8 to 28 (LIAL…MLSI), 35 to 55 (FLNA…LWFV), 71 to 91 (GFAM…CTFA), 105 to 125 (FYLL…ANHL), 127 to 147 (SLFL…GYAF), 159 to 179 (YTIL…LVYA), 203 to 223 (LLAG…LVPF), 235 to 255 (PAPV…GVVM), 271 to 291 (VVLA…ALSQ), 297 to 317 (LLGY…IALQ), 326 to 346 (VGGY…VVSL), 373 to 393 (AAVM…LGFI), 408 to 430 (WWLV…RVAV), and 455 to 475 (IVVL…QPLI).

This sequence belongs to the complex I subunit 2 family. As to quaternary structure, NDH-1 is composed of 13 different subunits. Subunits NuoA, H, J, K, L, M, N constitute the membrane sector of the complex.

It localises to the cell inner membrane. It catalyses the reaction a quinone + NADH + 5 H(+)(in) = a quinol + NAD(+) + 4 H(+)(out). Its function is as follows. NDH-1 shuttles electrons from NADH, via FMN and iron-sulfur (Fe-S) centers, to quinones in the respiratory chain. The immediate electron acceptor for the enzyme in this species is believed to be ubiquinone. Couples the redox reaction to proton translocation (for every two electrons transferred, four hydrogen ions are translocated across the cytoplasmic membrane), and thus conserves the redox energy in a proton gradient. The protein is NADH-quinone oxidoreductase subunit N of Shigella boydii serotype 18 (strain CDC 3083-94 / BS512).